We begin with the raw amino-acid sequence, 436 residues long: MGKGPLSFRRLSSIRHRKKGSAVKDDSAQTSTPSSPPPPLPIHAGGSAVGATGKAKKKTGGARLWMRFDRTGAMEVVECDKSTIIKRASVPARDLRILGPVFSHSSNILAREKAIVVNLEVIKAIVTAEEVLLLDPLRPEVLPFVERLKQQFPQRNGNENALQASANVQSPLDPEAAEGLQSELPFEFQVLEIALEVVCSFVDKSVAALETEAWPVLDELTKNVSTENLEYVRSLKSNLTRLLARVQKVRDELEHLLDDNEDMADLYLTRKWIQNQQTEAILAGTASNSIALPAHNTSNLHRLTSNRSASMVTSNTEEDDVEDLEMLLEAYFMQLDGMRNKILTVREYIDDTEDYVNIQLDNQRNELIQLQLTLTIASFAIAAETLLASLFGMNIPCPLYSIHGVFGYFVWSVTALCIVLFMVTLGYARWKKLLGS.

Residues Met1–Lys56 are disordered. The span at Ser12 to Ser21 shows a compositional bias: basic residues. The span at Ala44 to Gly53 shows a compositional bias: low complexity. A run of 2 helical transmembrane segments spans residues Leu372 to Gly392 and Val405 to Leu425. The Required for magnesium transport activity signature appears at Gly392–Asn394.

Belongs to the CorA metal ion transporter (MIT) (TC 1.A.35.5) family. In terms of tissue distribution, expressed in the whole plant except roots.

It localises to the membrane. Magnesium transporter that may mediate the influx of magnesium. The polypeptide is Magnesium transporter MRS2-4 (MRS2-4) (Arabidopsis thaliana (Mouse-ear cress)).